The primary structure comprises 868 residues: Leucine--tRNA ligase (868 aa).

Positions 42 to 52 (PYPSGKLHMGH) match the 'HIGH' region motif. The 'KMSKS' region signature appears at 627–631 (KMSKS). Residue K630 coordinates ATP.

This sequence belongs to the class-I aminoacyl-tRNA synthetase family.

It is found in the cytoplasm. The enzyme catalyses tRNA(Leu) + L-leucine + ATP = L-leucyl-tRNA(Leu) + AMP + diphosphate. The chain is Leucine--tRNA ligase from Pseudomonas putida (strain GB-1).